Consider the following 355-residue polypeptide: Probable nitronate monooxygenase (355 aa).

FMN-binding positions include Asn71, Gln175, Gly180, Gly218, and 237–240 (QMGT).

The protein belongs to the nitronate monooxygenase family. NMO class I subfamily. The cofactor is FMN.

It carries out the reaction 3 propionate 3-nitronate + 3 O2 + H2O = 3 3-oxopropanoate + 2 nitrate + nitrite + H2O2 + 3 H(+). Nitronate monooxygenase that uses molecular oxygen to catalyze the oxidative denitrification of alkyl nitronates. Acts on propionate 3-nitronate (P3N), the presumed physiological substrate. Probably functions in the detoxification of P3N, a metabolic poison produced by plants and fungi as a defense mechanism. The chain is Probable nitronate monooxygenase from Staphylococcus aureus (strain USA300).